A 175-amino-acid chain; its full sequence is MIHSVLIFNNDGLPRLMKFYTKVDIPTQKLLLQQVHSLISTRSAQECSFITPPSLLEDLDDIKVIYRHYATLYFVFIVDDQESELGILDLIQVFVECLDKCFSNVCELDLVFGWQVLQTVLEEIVQGGMVIDTNINRIVAAVDEANSQKNVNSNGSTISASILSSLSRDRGFWGR.

It belongs to the adaptor complexes small subunit family. As to quaternary structure, adaptor protein complex 3 (AP-3) is a heterotetramer composed of 2 large adaptins, a medium adaptin and a small adaptin.

The protein resides in the golgi apparatus. It is found in the cytoplasmic vesicle membrane. Part of the AP-3 complex, an adapter-related complex which is not clathrin-associated. The complex is associated with the Golgi region as well as more peripheral structures. It facilitates the budding of vesicles from the Golgi membrane. Involved in vacuolar trafficking and contributes to hyphal growth and pathogenesis. The protein is Clathrin-associated protein AP-3 complex component APS3 (APS3) of Candida albicans (strain SC5314 / ATCC MYA-2876) (Yeast).